A 236-amino-acid polypeptide reads, in one-letter code: Leucyl/phenylalanyl-tRNA--protein transferase (236 aa).

Belongs to the L/F-transferase family.

It is found in the cytoplasm. It carries out the reaction N-terminal L-lysyl-[protein] + L-leucyl-tRNA(Leu) = N-terminal L-leucyl-L-lysyl-[protein] + tRNA(Leu) + H(+). The enzyme catalyses N-terminal L-arginyl-[protein] + L-leucyl-tRNA(Leu) = N-terminal L-leucyl-L-arginyl-[protein] + tRNA(Leu) + H(+). The catalysed reaction is L-phenylalanyl-tRNA(Phe) + an N-terminal L-alpha-aminoacyl-[protein] = an N-terminal L-phenylalanyl-L-alpha-aminoacyl-[protein] + tRNA(Phe). In terms of biological role, functions in the N-end rule pathway of protein degradation where it conjugates Leu, Phe and, less efficiently, Met from aminoacyl-tRNAs to the N-termini of proteins containing an N-terminal arginine or lysine. This Shewanella sediminis (strain HAW-EB3) protein is Leucyl/phenylalanyl-tRNA--protein transferase.